The following is a 395-amino-acid chain: Sensor protein DltS (395 aa).

2 helical membrane-spanning segments follow: residues 9–29 (FVFL…AVSN) and 136–156 (FLIL…SLYL). The Histidine kinase domain maps to 177–387 (DASHELKTPI…RLEVQLPIDG (211 aa)). Position 180 is a phosphohistidine; by autocatalysis (His180).

The protein localises to the cell membrane. The enzyme catalyses ATP + protein L-histidine = ADP + protein N-phospho-L-histidine.. Functionally, member of the two-component regulatory system DltS/DltR. Regulates the expression of the dlt operon. Probably phosphorylates DltR. The chain is Sensor protein DltS (dltS) from Streptococcus agalactiae serotype V (strain ATCC BAA-611 / 2603 V/R).